Here is a 181-residue protein sequence, read N- to C-terminus: Thioredoxin-like protein CITRX2, chloroplastic (181 aa).

A chloroplast-targeting transit peptide spans 1–70; sequence MQAATLSFQP…PDVATGKYVR (70 aa). A Thioredoxin domain is found at 72–181; it reads DYLVKKVSAK…MMRDIINNDL (110 aa). Residues cysteine 104 and cysteine 107 each act as nucleophile in the active site. Cysteine 104 and cysteine 107 are oxidised to a cystine.

The protein belongs to the thioredoxin family. Plant CITRX-type subfamily.

It localises to the plastid. It is found in the chloroplast. Probable thiol-disulfide oxidoreductase that may play a role in proper chloroplast development. The polypeptide is Thioredoxin-like protein CITRX2, chloroplastic (Nicotiana benthamiana).